Here is a 91-residue protein sequence, read N- to C-terminus: uncharacterized protein (91 aa).

The signal sequence occupies residues 1–18; that stretch reads MKVNLILFSLFLLVSIMA. A lipid anchor (N-palmitoyl cysteine) is attached at cysteine 19. A lipid anchor (S-diacylglycerol cysteine) is attached at cysteine 19.

The protein localises to the cell membrane. This is an uncharacterized protein from Escherichia coli (strain K12).